Reading from the N-terminus, the 193-residue chain is Cyanate hydratase (193 aa).

Active-site residues include R121, E124, and S147.

This sequence belongs to the cyanase family.

It catalyses the reaction cyanate + hydrogencarbonate + 3 H(+) = NH4(+) + 2 CO2. Its function is as follows. Catalyzes the reaction of cyanate with bicarbonate to produce ammonia and carbon dioxide. The polypeptide is Cyanate hydratase (Phaeodactylum tricornutum (strain CCAP 1055/1)).